The chain runs to 248 residues: Proteasome subunit alpha type-3 (248 aa).

This sequence belongs to the peptidase T1A family. The 26S proteasome consists of a 20S proteasome core and two 19S regulatory subunits. The 20S proteasome core is composed of 28 subunits that are arranged in four stacked rings, resulting in a barrel-shaped structure. The two end rings are each formed by seven alpha subunits, and the two central rings are each formed by seven beta subunits. The catalytic chamber with the active sites is on the inside of the barrel.

Its subcellular location is the cytoplasm. It localises to the nucleus. In terms of biological role, the proteasome is a multicatalytic proteinase complex which is characterized by its ability to cleave peptides with Arg, Phe, Tyr, Leu, and Glu adjacent to the leaving group at neutral or slightly basic pH. The proteasome has an ATP-dependent proteolytic activity. The chain is Proteasome subunit alpha type-3 (psmA3) from Dictyostelium discoideum (Social amoeba).